A 179-amino-acid polypeptide reads, in one-letter code: ATP synthase subunit delta (179 aa).

This sequence belongs to the ATPase delta chain family. In terms of assembly, F-type ATPases have 2 components, F(1) - the catalytic core - and F(0) - the membrane proton channel. F(1) has five subunits: alpha(3), beta(3), gamma(1), delta(1), epsilon(1). F(0) has three main subunits: a(1), b(2) and c(10-14). The alpha and beta chains form an alternating ring which encloses part of the gamma chain. F(1) is attached to F(0) by a central stalk formed by the gamma and epsilon chains, while a peripheral stalk is formed by the delta and b chains.

The protein resides in the cell membrane. Functionally, f(1)F(0) ATP synthase produces ATP from ADP in the presence of a proton or sodium gradient. F-type ATPases consist of two structural domains, F(1) containing the extramembraneous catalytic core and F(0) containing the membrane proton channel, linked together by a central stalk and a peripheral stalk. During catalysis, ATP synthesis in the catalytic domain of F(1) is coupled via a rotary mechanism of the central stalk subunits to proton translocation. Its function is as follows. This protein is part of the stalk that links CF(0) to CF(1). It either transmits conformational changes from CF(0) to CF(1) or is implicated in proton conduction. In Rubrobacter xylanophilus (strain DSM 9941 / JCM 11954 / NBRC 16129 / PRD-1), this protein is ATP synthase subunit delta.